A 720-amino-acid polypeptide reads, in one-letter code: Collectin-12 (720 aa).

Topologically, residues 1–37 are cytoplasmic; it reads MKDDFNDEEEVQSFGYKRFGIQEGNECTKCKNDWALR. The chain crosses the membrane as a helical; Signal-anchor for type II membrane protein span at residues 38–58; it reads VAIALLYVLCALLTIAVAVLG. The Extracellular segment spans residues 59–720; sequence YKVVQRMDNV…RTNESKVPVL (662 aa). Coiled-coil stretches lie at residues 95 to 120, 216 to 267, and 377 to 408; these read EKSE…QLSD, ISSL…LAAN, and LHGL…LDKE. The interval 433 to 576 is disordered; the sequence is FTILQGPPGP…GPPGLPGLPA (144 aa). Collagen-like domains follow at residues 444 to 503 and 510 to 569; these read GPRG…PGPK and GRQG…PGPP. Over residues 460 to 479 the composition is skewed to basic and acidic residues; that stretch reads PKGEKGEKGAPGDAGPKGEK. A compositionally biased stretch (low complexity) spans 488–503; that stretch reads PGLKGPPGSRGSPGPK. A compositionally biased stretch (gly residues) spans 504–513; sequence GSRGSGGRQG. The segment covering 527 to 560 has biased composition (low complexity); it reads PGRDGQPGPTGPQGPQGLRGPAGPAGLEGARGPV. Pro residues predominate over residues 562–576; sequence PIGPPGPPGLPGLPA. 3 cysteine pairs are disulfide-bonded: cysteine 604-cysteine 615, cysteine 634-cysteine 709, and cysteine 687-cysteine 701. A C-type lectin domain is found at 611 to 710; that stretch reads FREQCYHFSA…CTERIGFICE (100 aa). Positions 643, 645, and 649 each coordinate Ca(2+). A carbohydrate-binding residues include lysine 670, glutamine 673, and aspartate 675. The Ca(2+) site is built by glutamine 673, aspartate 675, asparagine 676, glutamate 685, aspartate 686, asparagine 697, aspartate 698, and glutamate 710. Glutamate 685 lines the a carbohydrate pocket. A carbohydrate-binding residues include asparagine 697 and aspartate 698.

The protein localises to the membrane. In terms of biological role, scavenger receptor that displays several functions associated with host defense. Binds to carbohydrates. The chain is Collectin-12 (colec12) from Danio rerio (Zebrafish).